Reading from the N-terminus, the 628-residue chain is Nuclear RNA export factor 1 (628 aa).

Positions aspartate 47–glutamine 83 are disordered. Low complexity predominate over residues arginine 63 to arginine 72. One can recognise an RRM domain in the interval tyrosine 100–proline 179. LRR repeat units follow at residues asparagine 245–lysine 270 and phenylalanine 271–leucine 294. The region spanning leucine 365–isoleucine 526 is the NTF2 domain. One can recognise a TAP-C domain in the interval proline 576–histidine 628.

This sequence belongs to the NXF family. Interacts with nucleoporins, Nup98, Nup153 and Nup214.

The protein resides in the nucleus. In terms of biological role, involved in RNA export from the nucleus to the cytoplasm. This Caenorhabditis elegans protein is Nuclear RNA export factor 1 (nxf-1).